The chain runs to 24 residues: Brevinin-1SPc (24 aa).

Cys-18 and Cys-24 are disulfide-bonded.

As to expression, expressed by the skin glands.

The protein resides in the secreted. Its function is as follows. Antimicrobial peptide with activity against Gram-negative and Gram-positive bacteria and fungi. Also shows hemolytic activity. The chain is Brevinin-1SPc from Lithobates septentrionalis (Mink frog).